The chain runs to 377 residues: 4-hydroxy-3-methylbut-2-en-1-yl diphosphate synthase (flavodoxin) (377 aa).

Residues cysteine 272, cysteine 275, cysteine 307, and glutamate 314 each contribute to the [4Fe-4S] cluster site.

This sequence belongs to the IspG family. [4Fe-4S] cluster is required as a cofactor.

It catalyses the reaction (2E)-4-hydroxy-3-methylbut-2-enyl diphosphate + oxidized [flavodoxin] + H2O + 2 H(+) = 2-C-methyl-D-erythritol 2,4-cyclic diphosphate + reduced [flavodoxin]. The protein operates within isoprenoid biosynthesis; isopentenyl diphosphate biosynthesis via DXP pathway; isopentenyl diphosphate from 1-deoxy-D-xylulose 5-phosphate: step 5/6. Functionally, converts 2C-methyl-D-erythritol 2,4-cyclodiphosphate (ME-2,4cPP) into 1-hydroxy-2-methyl-2-(E)-butenyl 4-diphosphate. The sequence is that of 4-hydroxy-3-methylbut-2-en-1-yl diphosphate synthase (flavodoxin) from Zymomonas mobilis subsp. mobilis (strain ATCC 31821 / ZM4 / CP4).